Reading from the N-terminus, the 250-residue chain is DNA polymerase sliding clamp (250 aa).

Belongs to the PCNA family. Homotrimer. The subunits circularize to form a toroid; DNA passes through its center. Replication factor C (RFC) is required to load the toroid on the DNA.

Functionally, sliding clamp subunit that acts as a moving platform for DNA processing. Responsible for tethering the catalytic subunit of DNA polymerase and other proteins to DNA during high-speed replication. This chain is DNA polymerase sliding clamp, found in Methanococcus maripaludis (strain C7 / ATCC BAA-1331).